A 1011-amino-acid polypeptide reads, in one-letter code: Unconventional myosin ID (1011 aa).

In terms of domain architecture, Myosin motor spans 7 to 690 (AGVQDFVLLD…TLFALEHQRN (684 aa)). Residue 100–107 (GESGAGKT) participates in ATP binding. Positions 567 to 589 (MADLVVTLLKKEPFYVRCIKPND) are actin-binding. IQ domains follow at residues 694–714 (PHIVTLLQKRVRGWIVRRNFK) and 716–736 (MKAAITIVRAYKAYKLRSYVQ). The region spanning 806 to 1007 (AGRRPYWGQA…EGNIIFEVPA (202 aa)) is the TH1 domain.

The protein belongs to the TRAFAC class myosin-kinesin ATPase superfamily. Myosin family. Binds to F-actin. Interacts with arm. Interacts with shg. Interacts with ds (via intracellular region). As to expression, in the embryo, expressed in gastric caeca, midgut cells of the proventriculus, and in the mid and hindgut. In the larval gut brush border, expression is in the terminal web domain. In the adult gut brush border, expression remains in the web domain and has also moved into the microvilli. Also expressed at low levels in follicle cells during oogenesis.

It is found in the cytoplasm. It localises to the cell cortex. The protein localises to the cytoskeleton. Its subcellular location is the cell membrane. The protein resides in the cell junction. It is found in the adherens junction. It localises to the cell projection. Unconventional myosin that functions as actin-based motor protein with ATPase activity. Binds to membranes enriched in phosphatidylinositol 4-5-bisphosphate, and can glide along actin filaments when anchored to a lipid bilayer. Generates left-right asymmetry at the level of single cells, organs and the whole body via its interaction with the actin cytoskeleton, both in the embryo and the adult. Normal left-right asymmetry of the larval midgut and hindgut requires expression in the embryonic hindgut epithelium during a critical time period, 10 to 12.75 hours after egg laying. This period corresponds to a late stage of germband retraction, and precedes left-right asymmetric morphogenesis. Expression in segment H1 of the imaginal ring is required at 0 to 24 hours after pupation for changes of cell shape and orientation in the H2 segment, which then gives rise to normal, dextral looping of the adult hindgut. Required during a critical period, 126-132 hours after egg laying, for normal, dextral rotation of the adult male genitalia. Has a double role by promoting dextral rotation in the posterior compartment of segment A8 of the male genital disk, and in repressing sinistral looping in the anterior compartment. In Drosophila melanogaster (Fruit fly), this protein is Unconventional myosin ID.